The sequence spans 20 residues: Large ribosomal subunit protein uL10 (20 aa).

This sequence belongs to the universal ribosomal protein uL10 family. As to quaternary structure, part of the ribosomal stalk of the 50S ribosomal subunit. The N-terminus interacts with L11 and the large rRNA to form the base of the stalk. The C-terminus forms an elongated spine to which L12 dimers bind in a sequential fashion forming a multimeric L10(L12)X complex.

Its function is as follows. Forms part of the ribosomal stalk, playing a central role in the interaction of the ribosome with GTP-bound translation factors. In Citrobacter freundii, this protein is Large ribosomal subunit protein uL10 (rplJ).